The primary structure comprises 572 residues: Urease subunit alpha (572 aa).

In terms of domain architecture, Urease spans 134 to 572; sequence GGIDSHIHFI…LPMTQRYFLF (439 aa). Ni(2+) contacts are provided by His-139, His-141, and Lys-222. An N6-carboxylysine modification is found at Lys-222. Substrate is bound at residue His-224. Ni(2+) is bound by residues His-251 and His-277. The Proton donor role is filled by His-325. Position 365 (Asp-365) interacts with Ni(2+).

It belongs to the metallo-dependent hydrolases superfamily. Urease alpha subunit family. As to quaternary structure, heterotrimer of UreA (gamma), UreB (beta) and UreC (alpha) subunits. Three heterotrimers associate to form the active enzyme. It depends on Ni cation as a cofactor. Post-translationally, carboxylation allows a single lysine to coordinate two nickel ions.

The protein resides in the cytoplasm. The catalysed reaction is urea + 2 H2O + H(+) = hydrogencarbonate + 2 NH4(+). The protein operates within nitrogen metabolism; urea degradation; CO(2) and NH(3) from urea (urease route): step 1/1. The sequence is that of Urease subunit alpha from Polaromonas sp. (strain JS666 / ATCC BAA-500).